Reading from the N-terminus, the 291-residue chain is Tetrahydromethanopterin:alpha-L-glutamate ligase (291 aa).

The ATP-grasp domain occupies 101–286 (SVFLELNNLP…IADKLLEKII (186 aa)). Residues Lys-136, 175–187 (QEFIKPVRNEHRD), and Arg-203 contribute to the ATP site. Asp-247, Glu-259, and Asn-261 together coordinate Mg(2+). Mn(2+) is bound by residues Asp-247, Glu-259, and Asn-261.

It belongs to the RimK family. MptN subfamily. Homodimer. Requires Mg(2+) as cofactor. It depends on Mn(2+) as a cofactor.

The catalysed reaction is 5,6,7,8-tetrahydromethanopterin + L-glutamate + ATP = 5,6,7,8-tetrahydrosarcinapterin + ADP + phosphate + H(+). Its pathway is cofactor biosynthesis; 5,6,7,8-tetrahydrosarcinapterin biosynthesis. Catalyzes the ATP or GTP-dependent addition of one L-glutamate molecule to tetrahydromethanopterin, producing tetrahydrosarcinapterin. In Methanocaldococcus jannaschii (strain ATCC 43067 / DSM 2661 / JAL-1 / JCM 10045 / NBRC 100440) (Methanococcus jannaschii), this protein is Tetrahydromethanopterin:alpha-L-glutamate ligase (mptN).